Consider the following 640-residue polypeptide: Lysophospholipase (640 aa).

Residues 1–25 (MWFLNSVNLLFLVCSVALHLDAVNA) form the signal peptide. The PLA2c domain occupies 38-589 (DCDENINLVR…EKYCWNGTVD (552 aa)). N-linked (GlcNAc...) asparagine glycosylation is found at N84, N126, N163, N173, N218, N280, N310, N317, N348, N391, N492, N516, N544, N568, and N585. Low complexity predominate over residues 594–610 (ISSTTSSSASSTSTSDS). Positions 594 to 616 (ISSTTSSSASSTSTSDSGNKENS) are disordered.

The protein belongs to the lysophospholipase family. Highly glycosylated.

It is found in the secreted. The enzyme catalyses a 1-acyl-sn-glycero-3-phosphocholine + H2O = sn-glycerol 3-phosphocholine + a fatty acid + H(+). Functionally, catalyzes the release of fatty acids from lysophospholipids. At acidic pH the enzyme hydrolyzes all phospholipid substrates without metal ion. On the other hand, at alkaline pH the enzyme shows substrate specificity for phosphatidylcholine and lysophosphatidylcholine and requires Ca(2+), Fe(3+), or Al(3+) for the activity. This Kluyveromyces lactis (strain ATCC 8585 / CBS 2359 / DSM 70799 / NBRC 1267 / NRRL Y-1140 / WM37) (Yeast) protein is Lysophospholipase (PLB).